A 234-amino-acid chain; its full sequence is Opacity protein opA51 (234 aa).

A1 is a signal peptide.

It belongs to the opacity porin family.

Its subcellular location is the cell outer membrane. Implicated in a number of adherence functions. OPA proteins are implicated in pathogenesis and are subject to phase variation. The protein is Opacity protein opA51 (opaB) of Neisseria gonorrhoeae.